We begin with the raw amino-acid sequence, 89 residues long: Elongation factor 1-beta (89 aa).

It belongs to the EF-1-beta/EF-1-delta family.

Its function is as follows. Promotes the exchange of GDP for GTP in EF-1-alpha/GDP, thus allowing the regeneration of EF-1-alpha/GTP that could then be used to form the ternary complex EF-1-alpha/GTP/AAtRNA. The protein is Elongation factor 1-beta of Methanococcus vannielii (strain ATCC 35089 / DSM 1224 / JCM 13029 / OCM 148 / SB).